We begin with the raw amino-acid sequence, 305 residues long: Glycerol-3-phosphate dehydrogenase [NAD(P)+] (305 aa).

Residues tryptophan 11, arginine 31, and lysine 79 each contribute to the NADPH site. Sn-glycerol 3-phosphate-binding residues include lysine 79 and glycine 107. Alanine 111 is an NADPH binding site. Sn-glycerol 3-phosphate contacts are provided by lysine 162, aspartate 215, serine 225, arginine 226, and asparagine 227. Lysine 162 (proton acceptor) is an active-site residue. Arginine 226 serves as a coordination point for NADPH. Glutamate 252 lines the NADPH pocket.

This sequence belongs to the NAD-dependent glycerol-3-phosphate dehydrogenase family.

It localises to the cytoplasm. The enzyme catalyses sn-glycerol 3-phosphate + NAD(+) = dihydroxyacetone phosphate + NADH + H(+). It carries out the reaction sn-glycerol 3-phosphate + NADP(+) = dihydroxyacetone phosphate + NADPH + H(+). It functions in the pathway membrane lipid metabolism; glycerophospholipid metabolism. Its function is as follows. Catalyzes the reduction of the glycolytic intermediate dihydroxyacetone phosphate (DHAP) to sn-glycerol 3-phosphate (G3P), the key precursor for phospholipid synthesis. The chain is Glycerol-3-phosphate dehydrogenase [NAD(P)+] from Gloeobacter violaceus (strain ATCC 29082 / PCC 7421).